Consider the following 54-residue polypeptide: Small ribosomal subunit protein uS14 (54 aa).

Zn(2+) is bound by residues C19, C22, C37, and C40.

This sequence belongs to the universal ribosomal protein uS14 family. Zinc-binding uS14 subfamily. As to quaternary structure, part of the 30S ribosomal subunit. Zn(2+) is required as a cofactor.

Functionally, binds 16S rRNA, required for the assembly of 30S particles. This Saccharolobus solfataricus (strain ATCC 35092 / DSM 1617 / JCM 11322 / P2) (Sulfolobus solfataricus) protein is Small ribosomal subunit protein uS14.